Reading from the N-terminus, the 307-residue chain is Ribosomal RNA small subunit methyltransferase H (307 aa).

S-adenosyl-L-methionine is bound by residues 31–33 (GGH), D51, Y83, D97, and Q104.

This sequence belongs to the methyltransferase superfamily. RsmH family.

It is found in the cytoplasm. It catalyses the reaction cytidine(1402) in 16S rRNA + S-adenosyl-L-methionine = N(4)-methylcytidine(1402) in 16S rRNA + S-adenosyl-L-homocysteine + H(+). Specifically methylates the N4 position of cytidine in position 1402 (C1402) of 16S rRNA. This chain is Ribosomal RNA small subunit methyltransferase H, found in Buchnera aphidicola subsp. Cinara cedri (strain Cc).